The chain runs to 163 residues: General stress protein 16O (163 aa).

The span at 19–30 (QKELSGEKKETE) shows a compositional bias: basic and acidic residues. Disordered stretches follow at residues 19 to 55 (QKELSGEKKETESMTEEVGELSNGVDNHMADHGTLVT) and 115 to 163 (ADVE…QDSK). The dksA C4-type; degenerate zinc-finger motif lies at 89–123 (CEKTGQEIPYERLEAVPYARMTVEAQADVEDDLET). The segment covering 127–146 (SYEREFHEQVKDLSNKETID) has biased composition (basic and acidic residues).

The chain is General stress protein 16O (yocK) from Bacillus subtilis (strain 168).